We begin with the raw amino-acid sequence, 247 residues long: ATP synthase subunit a, chloroplastic (247 aa).

The next 5 membrane-spanning stretches (helical) occupy residues 38–58 (QVLITSWVVIAILLGSVTLAV), 95–115 (VPFIGTMFLFIFVSNWSGALL), 134–154 (INTTVALALLTSVAYFYAGLS), 199–219 (LVVVVLVSLVPLVVPIPVMFL), and 220–240 (GLFTSGIQALIFATLAAAYIG).

The protein belongs to the ATPase A chain family. F-type ATPases have 2 components, CF(1) - the catalytic core - and CF(0) - the membrane proton channel. CF(1) has five subunits: alpha(3), beta(3), gamma(1), delta(1), epsilon(1). CF(0) has four main subunits: a, b, b' and c.

The protein resides in the plastid. Its subcellular location is the chloroplast thylakoid membrane. Its function is as follows. Key component of the proton channel; it plays a direct role in the translocation of protons across the membrane. The protein is ATP synthase subunit a, chloroplastic of Lemna minor (Common duckweed).